The primary structure comprises 109 residues: Large ribosomal subunit protein uL22 (109 aa).

The segment covering 84–95 (ARGTASRIRKPT) has biased composition (basic residues). The tract at residues 84 to 109 (ARGTASRIRKPTSHIMVEVSKPSKEA) is disordered.

The protein belongs to the universal ribosomal protein uL22 family. Part of the 50S ribosomal subunit.

In terms of biological role, this protein binds specifically to 23S rRNA; its binding is stimulated by other ribosomal proteins, e.g. L4, L17, and L20. It is important during the early stages of 50S assembly. It makes multiple contacts with different domains of the 23S rRNA in the assembled 50S subunit and ribosome. Its function is as follows. The globular domain of the protein is located near the polypeptide exit tunnel on the outside of the subunit, while an extended beta-hairpin is found that lines the wall of the exit tunnel in the center of the 70S ribosome. The chain is Large ribosomal subunit protein uL22 from Campylobacter hominis (strain ATCC BAA-381 / DSM 21671 / CCUG 45161 / LMG 19568 / NCTC 13146 / CH001A).